Here is a 91-residue protein sequence, read N- to C-terminus: UPF0298 protein spyM18_0447 (91 aa).

The protein belongs to the UPF0298 family.

Its subcellular location is the cytoplasm. The polypeptide is UPF0298 protein spyM18_0447 (Streptococcus pyogenes serotype M18 (strain MGAS8232)).